The sequence spans 628 residues: Chaperone protein HtpG (628 aa).

The segment at 1-340 is a; substrate-binding; it reads MKGQETRGFQ…SNDLPLNVSR (340 aa). The segment at 341–556 is b; that stretch reads EILQDSRVTQ…ADDMTTQMAK (216 aa). Residues 557–628 are c; it reads LFAAAGQAAP…IRRMNQLLNA (72 aa).

This sequence belongs to the heat shock protein 90 family. As to quaternary structure, homodimer.

Its subcellular location is the cytoplasm. Functionally, molecular chaperone. Has ATPase activity. The sequence is that of Chaperone protein HtpG from Sodalis glossinidius (strain morsitans).